Here is a 311-residue protein sequence, read N- to C-terminus: Pyrimidine-specific ribonucleoside hydrolase RihA (311 aa).

H240 is a catalytic residue.

Belongs to the IUNH family. RihA subfamily.

Functionally, hydrolyzes with equal efficiency cytidine or uridine to ribose and cytosine or uracil, respectively. The sequence is that of Pyrimidine-specific ribonucleoside hydrolase RihA from Escherichia coli O17:K52:H18 (strain UMN026 / ExPEC).